A 360-amino-acid polypeptide reads, in one-letter code: MHLTRLNIERVRNLKTVALHGLQPFNVFYGANGSGKTSILEAIHLLATGRSFRTHIPKNYIQYEADDAIVFAQSATEKIGMQKLASGEQLMKVNGDTVATQGQLAKLLPLQHIDPQSTDIIDHGAKPRRQLLDWLMFHVEPEFYFAWQYYSRALKQRNTLLKTRRNLSLADLEPWNKMLSDYGEILHSQRLSIVEQWNVYFQNDLSQLLPDLEIELEYSPGFHTEQGLMQDLLNQHQKDIERRYTEYGPHRADLRLKTPFGHADDVLSRGQKKLLIIALKLSQIAMLHASNKETVVLLDDLTAELDLTAQQRLIERLSQLGSQVFMTTLDHASVKKHLHDLSISYQLFSVESGQVSLAAP.

30–37 (GANGSGKT) lines the ATP pocket.

It belongs to the RecF family.

The protein localises to the cytoplasm. In terms of biological role, the RecF protein is involved in DNA metabolism; it is required for DNA replication and normal SOS inducibility. RecF binds preferentially to single-stranded, linear DNA. It also seems to bind ATP. The sequence is that of DNA replication and repair protein RecF from Acinetobacter baumannii (strain AB307-0294).